Consider the following 365-residue polypeptide: Quinone oxidoreductase-like protein 2 homolog (365 aa).

The protein belongs to the zinc-containing alcohol dehydrogenase family. Quinone oxidoreductase subfamily.

The protein is Quinone oxidoreductase-like protein 2 homolog of Nematostella vectensis (Starlet sea anemone).